Reading from the N-terminus, the 485-residue chain is ATP synthase subunit beta 1 (485 aa).

Residue 157–164 (GGAGVGKT) coordinates ATP.

It belongs to the ATPase alpha/beta chains family. As to quaternary structure, F-type ATPases have 2 components, CF(1) - the catalytic core - and CF(0) - the membrane proton channel. CF(1) has five subunits: alpha(3), beta(3), gamma(1), delta(1), epsilon(1). CF(0) has three main subunits: a(1), b(2) and c(9-12). The alpha and beta chains form an alternating ring which encloses part of the gamma chain. CF(1) is attached to CF(0) by a central stalk formed by the gamma and epsilon chains, while a peripheral stalk is formed by the delta and b chains.

The protein resides in the cell inner membrane. The catalysed reaction is ATP + H2O + 4 H(+)(in) = ADP + phosphate + 5 H(+)(out). Functionally, produces ATP from ADP in the presence of a proton gradient across the membrane. The catalytic sites are hosted primarily by the beta subunits. In Psychromonas ingrahamii (strain DSM 17664 / CCUG 51855 / 37), this protein is ATP synthase subunit beta 1.